We begin with the raw amino-acid sequence, 285 residues long: Energy-coupling factor transporter ATP-binding protein EcfA2 (285 aa).

The ABC transporter domain occupies 3 to 245; the sequence is IKIENLNHIY…VETLEKIGLA (243 aa). An ATP-binding site is contributed by 40 to 47; it reads GHTGSGKS.

The protein belongs to the ABC transporter superfamily. Energy-coupling factor EcfA family. Forms a stable energy-coupling factor (ECF) transporter complex composed of 2 membrane-embedded substrate-binding proteins (S component), 2 ATP-binding proteins (A component) and 2 transmembrane proteins (T component).

It localises to the cell membrane. ATP-binding (A) component of a common energy-coupling factor (ECF) ABC-transporter complex. Unlike classic ABC transporters this ECF transporter provides the energy necessary to transport a number of different substrates. In Clostridium perfringens (strain 13 / Type A), this protein is Energy-coupling factor transporter ATP-binding protein EcfA2.